Consider the following 394-residue polypeptide: Probable pectate lyase 16 (394 aa).

The first 22 residues, 1–22, serve as a signal peptide directing secretion; it reads MTLFTVSCLLVVLFLCHSLVHA. 3 residues coordinate Ca(2+): aspartate 192, aspartate 216, and aspartate 220. The active site involves arginine 272.

This sequence belongs to the polysaccharide lyase 1 family. Ca(2+) is required as a cofactor.

It carries out the reaction Eliminative cleavage of (1-&gt;4)-alpha-D-galacturonan to give oligosaccharides with 4-deoxy-alpha-D-galact-4-enuronosyl groups at their non-reducing ends.. It participates in glycan metabolism; pectin degradation; 2-dehydro-3-deoxy-D-gluconate from pectin: step 2/5. The sequence is that of Probable pectate lyase 16 from Arabidopsis thaliana (Mouse-ear cress).